The sequence spans 412 residues: Sulfhydrogenase 2 subunit alpha (412 aa).

Residues Cys-60, Cys-63, Cys-402, and Cys-405 each contribute to the Ni(2+) site. Cys-63 contributes to the Fe cation binding site. Cys-405 is a Fe cation binding site.

It belongs to the [NiFe]/[NiFeSe] hydrogenase large subunit family. In terms of assembly, dimer of heterotetramer of alpha, beta, gamma and delta subunits. The nickel-containing alpha and delta subunits constitute the hydrogenase activity. The beta and gamma subunits (flavin-containing dimer) constitute the sulfur reductase activity. Requires Ni(2+) as cofactor. Fe cation serves as cofactor.

It localises to the cytoplasm. It carries out the reaction H2 + NADP(+) = NADPH + H(+). The enzyme catalyses H2 + NAD(+) = NADH + H(+). Functionally, part of a bifunctional enzyme complex that functions as a hydrogen-evolving hydrogenase with sulfur-reducing activity. May play a role in hydrogen cycling during fermentative growth. Activity exhibited with NAD in addition to NADPH. The alpha and delta subunits form the hydrogenase component that catalyzes the reduction of protons to evolve hydrogen. The chain is Sulfhydrogenase 2 subunit alpha from Pyrococcus furiosus (strain ATCC 43587 / DSM 3638 / JCM 8422 / Vc1).